The sequence spans 177 residues: Large ribosomal subunit protein uL6 (177 aa).

This sequence belongs to the universal ribosomal protein uL6 family. As to quaternary structure, part of the 50S ribosomal subunit.

Its function is as follows. This protein binds to the 23S rRNA, and is important in its secondary structure. It is located near the subunit interface in the base of the L7/L12 stalk, and near the tRNA binding site of the peptidyltransferase center. This is Large ribosomal subunit protein uL6 from Yersinia pseudotuberculosis serotype O:1b (strain IP 31758).